The primary structure comprises 369 residues: Putative agmatine deiminase (369 aa).

Cysteine 361 acts as the Amidino-cysteine intermediate in catalysis.

This sequence belongs to the agmatine deiminase family.

It catalyses the reaction agmatine + H2O = N-carbamoylputrescine + NH4(+). This chain is Putative agmatine deiminase, found in Streptococcus mutans serotype c (strain ATCC 700610 / UA159).